Here is a 316-residue protein sequence, read N- to C-terminus: uncharacterized protein (316 aa).

One can recognise an HTH lacI-type domain in the interval 1-56; that stretch reads MATLSDVAKKANVSKMTVSRVINHPETVTDELKKLVHSAMKELNYIPNYAARALVQ. Residues 4–23 constitute a DNA-binding region (H-T-H motif); the sequence is LSDVAKKANVSKMTVSRVIN.

This is an uncharacterized protein from Bacillus subtilis (strain 168).